We begin with the raw amino-acid sequence, 392 residues long: S-adenosylmethionine synthase (392 aa).

His-15 provides a ligand contact to ATP. Residue Asp-17 participates in Mg(2+) binding. Glu-43 serves as a coordination point for K(+). L-methionine is bound by residues Glu-56 and Gln-99. Residues 99 to 109 (QSKDIAQGVDE) form a flexible loop region. ATP-binding positions include 173–175 (DGK), 239–240 (KF), Asp-248, 254–255 (RK), Ala-271, and Lys-275. Asp-248 is an L-methionine binding site. Residue Lys-279 participates in L-methionine binding.

The protein belongs to the AdoMet synthase family. Homotetramer; dimer of dimers. It depends on Mg(2+) as a cofactor. K(+) is required as a cofactor.

Its subcellular location is the cytoplasm. It catalyses the reaction L-methionine + ATP + H2O = S-adenosyl-L-methionine + phosphate + diphosphate. It participates in amino-acid biosynthesis; S-adenosyl-L-methionine biosynthesis; S-adenosyl-L-methionine from L-methionine: step 1/1. Catalyzes the formation of S-adenosylmethionine (AdoMet) from methionine and ATP. The overall synthetic reaction is composed of two sequential steps, AdoMet formation and the subsequent tripolyphosphate hydrolysis which occurs prior to release of AdoMet from the enzyme. The protein is S-adenosylmethionine synthase of Finegoldia magna (strain ATCC 29328 / DSM 20472 / WAL 2508) (Peptostreptococcus magnus).